The sequence spans 657 residues: Heat shock protein hsp-6 (657 aa).

The N-terminal 27 residues, 1-27 (MLSARSFLSSARTIARSSLMSARSLSD), are a transit peptide targeting the mitochondrion. Residues 637-657 (KNSGGDAQEAKTAEEPKKEQN) are disordered. Residues 644–657 (QEAKTAEEPKKEQN) show a composition bias toward basic and acidic residues.

It belongs to the heat shock protein 70 family.

The protein localises to the mitochondrion. The sequence is that of Heat shock protein hsp-6 from Caenorhabditis elegans.